A 691-amino-acid polypeptide reads, in one-letter code: Zinc finger protein 770 (691 aa).

Lys-11 participates in a covalent cross-link: Glycyl lysine isopeptide (Lys-Gly) (interchain with G-Cter in SUMO2). 3 consecutive C2H2-type zinc fingers follow at residues 27–49 (YVCN…YLIH), 55–77 (FECD…QLTH), and 81–103 (FKCS…QQLH). Glycyl lysine isopeptide (Lys-Gly) (interchain with G-Cter in SUMO2) cross-links involve residues Lys-112, Lys-121, and Lys-146. 3 consecutive C2H2-type zinc fingers follow at residues 160 to 182 (HACT…VLIH), 188 to 210 (FKCV…QLTH), and 216 to 238 (FQCC…KQIH). The tract at residues 258–277 (PLPNKLNANQGGFENGEIGE) is disordered. Lys-262 is covalently cross-linked (Glycyl lysine isopeptide (Lys-Gly) (interchain with G-Cter in SUMO2)). The segment at 294–318 (FQCPKCEKCFESEQILNEHSCFAAR) adopts a C2H2-type 7; degenerate zinc-finger fold. Residues Lys-420 and Lys-437 each participate in a glycyl lysine isopeptide (Lys-Gly) (interchain with G-Cter in SUMO2) cross-link. 4 consecutive C2H2-type zinc fingers follow at residues 475 to 497 (CPCD…YLIH), 503 to 525 (FGCN…EQTH), 625 to 647 (YRCS…YLIH), and 653 to 675 (FECS…QLTH). Residue Lys-683 forms a Glycyl lysine isopeptide (Lys-Gly) (interchain with G-Cter in SUMO2) linkage.

This sequence belongs to the krueppel C2H2-type zinc-finger protein family.

Its subcellular location is the nucleus. In terms of biological role, may be involved in transcriptional regulation. This is Zinc finger protein 770 (ZNF770) from Homo sapiens (Human).